Here is a 473-residue protein sequence, read N- to C-terminus: MAVKTYNAGVKEYRETYWDPNYTPADTDLLAVFKITPQPGVPREEAAAAVAAESSTGTWTTVWTDLLTDLDYYKGRAYRIEDVPGQDEQFYAFIAYPIDLFEEGSVVNVFTSLVGNVFGFKAVRGLRLEDVRFPLAYVMTCGGPPHGIQVERDIMNKYGRPLLGCTIKPKLGLSAKNYGRAVYECLRGGLDFTKDDENVNSQPFMRWRQRFDFVMEAIEKAEAETGERKGHYLNVTAPTPEEMYKRAEYAKEIGAPIIMHDFITGGFCANTGLANWCRNNGMLLHIHRAMHAVMDRNPNHGIHFRVFTKMLRLSGGDHLHTGTVVGKLEGDRQATLGWIDLLRERSIKEDRSRGIFFDQEWGAMPGVFAVASGGIHVWHMPALLSIFGDDAVFQFGGGTLGHPWGNAAGAAANRVALEACVEARNEGRQLEKEGKEILTEAAKSSPELKAAMETWKEIKFEFDTVDKLDVAHR.

2 residues coordinate substrate: Asn116 and Thr166. Residue Lys168 is the Proton acceptor of the active site. Lys170 is a binding site for substrate. Residues Lys194, Asp196, and Glu197 each coordinate Mg(2+). Residue Lys194 is modified to N6-carboxylysine. The active-site Proton acceptor is His287. Residues Arg288, His320, and Ser372 each coordinate substrate.

It belongs to the RuBisCO large chain family. Type I subfamily. Heterohexadecamer of 8 large chains and 8 small chains. Mg(2+) is required as a cofactor.

The catalysed reaction is 2 (2R)-3-phosphoglycerate + 2 H(+) = D-ribulose 1,5-bisphosphate + CO2 + H2O. It carries out the reaction D-ribulose 1,5-bisphosphate + O2 = 2-phosphoglycolate + (2R)-3-phosphoglycerate + 2 H(+). Its function is as follows. RuBisCO catalyzes two reactions: the carboxylation of D-ribulose 1,5-bisphosphate, the primary event in carbon dioxide fixation, as well as the oxidative fragmentation of the pentose substrate. Both reactions occur simultaneously and in competition at the same active site. This is Ribulose bisphosphate carboxylase large chain from Methylococcus capsulatus (strain ATCC 33009 / NCIMB 11132 / Bath).